The chain runs to 75 residues: UPF0154 protein MYPU_1460 (75 aa).

Residues 8-28 (GLIVGLSILFFIIGGVVAFFV) traverse the membrane as a helical segment.

Belongs to the UPF0154 family.

It localises to the membrane. The polypeptide is UPF0154 protein MYPU_1460 (Mycoplasmopsis pulmonis (strain UAB CTIP) (Mycoplasma pulmonis)).